The primary structure comprises 402 residues: uncharacterized protein (402 aa).

Belongs to the peptidase M20 family.

This is an uncharacterized protein from Sinorhizobium fredii (strain NBRC 101917 / NGR234).